The following is a 132-amino-acid chain: Small ribosomal subunit protein uS8 (132 aa).

It belongs to the universal ribosomal protein uS8 family. In terms of assembly, part of the 30S ribosomal subunit. Contacts proteins S5 and S12.

In terms of biological role, one of the primary rRNA binding proteins, it binds directly to 16S rRNA central domain where it helps coordinate assembly of the platform of the 30S subunit. In Borrelia hermsii (strain HS1 / DAH), this protein is Small ribosomal subunit protein uS8.